A 169-amino-acid chain; its full sequence is Nucleoside diphosphate kinase 3 (169 aa).

Residues Lys29, Arg105, Thr111, Arg122, Val129, and Asn132 each coordinate ADP. His135 acts as the Pros-phosphohistidine intermediate in catalysis.

This sequence belongs to the NDK family. As to quaternary structure, homohexamer. Interacts (via its N-terminal region) with KAT5; this interaction enables recruitment of NME3 at DNA damage sites where it plays a role in the repair of DNA. Found in association with several ciliary nephronophthisis proteins, including NEK8, CEP164, ANKS6. Mg(2+) is required as a cofactor.

Its subcellular location is the mitochondrion outer membrane. It is found in the cytoplasm. The protein localises to the cytoskeleton. It localises to the cilium basal body. The enzyme catalyses a 2'-deoxyribonucleoside 5'-diphosphate + ATP = a 2'-deoxyribonucleoside 5'-triphosphate + ADP. The catalysed reaction is a ribonucleoside 5'-diphosphate + ATP = a ribonucleoside 5'-triphosphate + ADP. In terms of biological role, catalyzes the phosphorylation of ribonucleosides and deoxyribonucleoside diphosphates, other than ATP, into the corresponding triphosphates with ATP as the major phosphate donor. The ATP gamma phosphate is transferred to the nucleoside diphosphate beta phosphate via a ping-pong mechanism, using a phosphorylated active-site intermediate. Through the catalyzed exchange of gamma-phosphate between di- and triphosphonucleosides participates in regulation of intracellular nucleotide homeostasis. Inhibits granulocyte differentiation. May be required for ciliary function during renal development. Independently of its kinase activity, facilitates mitochondrial tethering prior to membrane fusion through its direct membrane-binding and hexamerization. Implicated in repair of both single- and double-stranded breaks in DNA through its association with the ribonucleotide reductase complex (RNR complex) via its interaction with the histone acetyltransferase KAT5, this interaction enables recruitment of NME3 at DNA damage sites where it plays a role in the repair of DNA, independently of its kinase activity. This is Nucleoside diphosphate kinase 3 from Homo sapiens (Human).